Here is a 259-residue protein sequence, read N- to C-terminus: Global transcriptional regulator CodY (259 aa).

The interval 1–155 (MELLAKTRKL…SSTVVGMEIL (155 aa)) is GAF domain. Residues 203–222 (ASKIADRVGITRSVIVNALR) constitute a DNA-binding region (H-T-H motif). Ser215 is modified (phosphoserine).

The protein belongs to the CodY family.

The protein localises to the cytoplasm. Its function is as follows. DNA-binding global transcriptional regulator which is involved in the adaptive response to starvation and acts by directly or indirectly controlling the expression of numerous genes in response to nutrient availability. During rapid exponential growth, CodY is highly active and represses genes whose products allow adaptation to nutrient depletion. This is Global transcriptional regulator CodY from Bacillus cereus (strain ATCC 10987 / NRS 248).